An 83-amino-acid polypeptide reads, in one-letter code: Retinal cone rhodopsin-sensitive cGMP 3',5'-cyclic phosphodiesterase subunit gamma (83 aa).

The segment covering 1-19 (MSDNTTLAPPAASQAPATP) has biased composition (low complexity). The segment at 1–51 (MSDNTTLAPPAASQAPATPRKGPPKFKQRQTRQFKSKPPKKGVKGFGDDIP) is disordered. The span at 22-43 (GPPKFKQRQTRQFKSKPPKKGV) shows a compositional bias: basic residues.

Belongs to the rod/cone cGMP-PDE gamma subunit family. In terms of assembly, tetramer composed of two catalytic chains (alpha and beta), and two inhibitory chains (gamma).

It carries out the reaction 3',5'-cyclic GMP + H2O = GMP + H(+). Its function is as follows. Participates in processes of transmission and amplification of the visual signal. cGMP-PDEs are the effector molecules in G-protein-mediated phototransduction in vertebrate rods and cones. The protein is Retinal cone rhodopsin-sensitive cGMP 3',5'-cyclic phosphodiesterase subunit gamma (PDE6H) of Ictidomys tridecemlineatus (Thirteen-lined ground squirrel).